A 516-amino-acid polypeptide reads, in one-letter code: Ribonuclease Y (516 aa).

The helical transmembrane segment at 1–21 threads the bilayer; the sequence is MLIKIVIACVITAIIVALIAW. Residues 206–269 form the KH domain; sequence TISVVQLPND…ETARIALEKL (64 aa). In terms of domain architecture, HD spans 332–425; sequence ALKHSIEVAI…VQAADTISAA (94 aa).

It belongs to the RNase Y family.

Its subcellular location is the cell membrane. In terms of biological role, endoribonuclease that initiates mRNA decay. The protein is Ribonuclease Y of Lachnoclostridium phytofermentans (strain ATCC 700394 / DSM 18823 / ISDg) (Clostridium phytofermentans).